Here is a 594-residue protein sequence, read N- to C-terminus: Insulin-like growth factor 2 mRNA-binding protein 3-A (594 aa).

2 RRM domains span residues 2–75 and 81–156; these read NKLY…HSVP and RKLQ…YIPD. Over residues 161-177 the composition is skewed to low complexity; the sequence is PQAPSQQLQQQPQQQHP. The disordered stretch occupies residues 161–206; sequence PQAPSQQLQQQPQQQHPQGRRGFGQRGPARQGSPGAAARPKPQTEV. KH domains lie at 205–270 and 286–353; these read EVPL…CKII and EIPL…EEEI. Positions 392 to 415 are disordered; sequence GMPPPSVGVPSPTSSTSYPPFGQQ. The span at 399 to 411 shows a compositional bias: low complexity; the sequence is GVPSPTSSTSYPP. 2 KH domains span residues 418–483 and 500–566; these read SETV…QGRI and KLET…QRKI.

The protein belongs to the RRM IMP/VICKZ family. In terms of assembly, homodimer and multimer. Associates with microtubules. Interaction with a translocation machinery protein TRAPA of the endoplasmic reticulum. Component of a mRNP complex, at least composed of DAZAP1, IGF2BP3, STAU and VgRBP60. The mRNP complex with DAZAP1, IGF2BP3, STAU and VgRBP60 is only found in the cytoplasm. Interacts with a hnRNP 1 related RNA transport protein VgRBP60 both in the nucleus (in a RNA-independent manner) and the cytoplasm (in a RNA-dependent manner). Found in a B3 activator complex.

The protein localises to the nucleus. Its subcellular location is the cytoplasm. The protein resides in the endoplasmic reticulum. Functionally, RNA-binding protein that acts as a regulator of mRNA transport and localization. Binds to the RNA sequence motif 5'-UUCAC-3'. Preferentially binds to N6-methyladenosine (m6A)-containing mRNAs and increases their stability. Mediates the specific association of Vg1 RNA to microtubules. Binds specifically to the vegetal localization elements (VLE or VgLE) in the 3'-UTR of Vg1 and VegT mRNAs. Binds to the Vg1 and VegT mRNAs in both the nucleus and the cytoplasm. May regulate mRNA translation. Acts as a transcription regulator. Binds to the 5'-[TA]GGTTACT-3' motif within element 3 of the TFIIIA gene promoter. This chain is Insulin-like growth factor 2 mRNA-binding protein 3-A (igf2bp3-a), found in Xenopus laevis (African clawed frog).